The chain runs to 496 residues: Omega-crystallin (496 aa).

This sequence belongs to the aldehyde dehydrogenase family. As to expression, lens.

In terms of biological role, omega-crystallins are structural components of squids and octopi eye lens. Contains relatively little if any DHAL activity. This is Omega-crystallin from Enteroctopus dofleini (North Pacific giant octopus).